The following is a 373-amino-acid chain: tRNA (guanine(26)-N(2))-dimethyltransferase (373 aa).

One can recognise a Trm1 methyltransferase domain in the interval 2–365 (KIISEGETKL…AELSDLVVLI (364 aa)). S-adenosyl-L-methionine contacts are provided by arginine 35, arginine 66, aspartate 86, aspartate 113, and alanine 114.

Belongs to the class I-like SAM-binding methyltransferase superfamily. Trm1 family.

It catalyses the reaction guanosine(26) in tRNA + 2 S-adenosyl-L-methionine = N(2)-dimethylguanosine(26) in tRNA + 2 S-adenosyl-L-homocysteine + 2 H(+). In terms of biological role, dimethylates a single guanine residue at position 26 of a number of tRNAs using S-adenosyl-L-methionine as donor of the methyl groups. This chain is tRNA (guanine(26)-N(2))-dimethyltransferase, found in Methanococcus maripaludis (Methanococcus deltae).